A 250-amino-acid chain; its full sequence is MNICLIDETGAGDGALSVLAARWGLTHDADNPMALVMTSARLELRKRDEPKLGGIFVDFVEGAMAHRRKFGGGRGEAVAKAVGIKGSYLPQVVDATAGLGRDAFVLASVGCHVRMLERNPVVAALLDDGLARGYQDAEIGPWLRERLQLIHASSLTALEAITPRPDVVYLDPMFPHKQKSALVKKEMRVFQSLVGPDLDADGLLAPARRLAIKRVVVKRPDYAPPLGDVATPNAVVTKGHRFDIYTGTPA.

S-adenosyl-L-methionine contacts are provided by residues 101–102 (RD), 117–118 (ER), 153–154 (SS), and D171.

It belongs to the methyltransferase superfamily. RsmJ family.

It is found in the cytoplasm. The catalysed reaction is guanosine(1516) in 16S rRNA + S-adenosyl-L-methionine = N(2)-methylguanosine(1516) in 16S rRNA + S-adenosyl-L-homocysteine + H(+). Specifically methylates the guanosine in position 1516 of 16S rRNA. The chain is Ribosomal RNA small subunit methyltransferase J from Cronobacter sakazakii (strain ATCC BAA-894) (Enterobacter sakazakii).